Consider the following 150-residue polypeptide: UPF0098 protein CT_736 (150 aa).

This sequence belongs to the UPF0098 family.

This Chlamydia trachomatis serovar D (strain ATCC VR-885 / DSM 19411 / UW-3/Cx) protein is UPF0098 protein CT_736.